We begin with the raw amino-acid sequence, 103 residues long: Small ribosomal subunit protein uS10 (103 aa).

The protein belongs to the universal ribosomal protein uS10 family. Part of the 30S ribosomal subunit.

In terms of biological role, involved in the binding of tRNA to the ribosomes. The chain is Small ribosomal subunit protein uS10 from Shewanella frigidimarina (strain NCIMB 400).